We begin with the raw amino-acid sequence, 187 residues long: Protein GrpE (187 aa).

Residues Met1–Asp26 form a disordered region.

This sequence belongs to the GrpE family. In terms of assembly, homodimer.

It localises to the cytoplasm. Functionally, participates actively in the response to hyperosmotic and heat shock by preventing the aggregation of stress-denatured proteins, in association with DnaK and GrpE. It is the nucleotide exchange factor for DnaK and may function as a thermosensor. Unfolded proteins bind initially to DnaJ; upon interaction with the DnaJ-bound protein, DnaK hydrolyzes its bound ATP, resulting in the formation of a stable complex. GrpE releases ADP from DnaK; ATP binding to DnaK triggers the release of the substrate protein, thus completing the reaction cycle. Several rounds of ATP-dependent interactions between DnaJ, DnaK and GrpE are required for fully efficient folding. The chain is Protein GrpE from Methylocella silvestris (strain DSM 15510 / CIP 108128 / LMG 27833 / NCIMB 13906 / BL2).